The chain runs to 320 residues: Ferrochelatase (320 aa).

Residues H194 and E275 each coordinate Fe cation.

It belongs to the ferrochelatase family. In terms of assembly, monomer.

It is found in the cytoplasm. The catalysed reaction is heme b + 2 H(+) = protoporphyrin IX + Fe(2+). It functions in the pathway porphyrin-containing compound metabolism; protoheme biosynthesis; protoheme from protoporphyrin-IX: step 1/1. Its function is as follows. Catalyzes the ferrous insertion into protoporphyrin IX. The protein is Ferrochelatase of Shigella boydii serotype 4 (strain Sb227).